A 287-amino-acid chain; its full sequence is Pyridoxal 5'-phosphate synthase subunit PdxS (287 aa).

D-ribose 5-phosphate is bound at residue aspartate 21. Lysine 78 (schiff-base intermediate with D-ribose 5-phosphate) is an active-site residue. Glycine 150 is a binding site for D-ribose 5-phosphate. Residue arginine 162 participates in D-glyceraldehyde 3-phosphate binding. Residues glycine 211 and 232 to 233 contribute to the D-ribose 5-phosphate site; that span reads GS.

This sequence belongs to the PdxS/SNZ family. In terms of assembly, in the presence of PdxT, forms a dodecamer of heterodimers.

It catalyses the reaction aldehydo-D-ribose 5-phosphate + D-glyceraldehyde 3-phosphate + L-glutamine = pyridoxal 5'-phosphate + L-glutamate + phosphate + 3 H2O + H(+). The protein operates within cofactor biosynthesis; pyridoxal 5'-phosphate biosynthesis. In terms of biological role, catalyzes the formation of pyridoxal 5'-phosphate from ribose 5-phosphate (RBP), glyceraldehyde 3-phosphate (G3P) and ammonia. The ammonia is provided by the PdxT subunit. Can also use ribulose 5-phosphate and dihydroxyacetone phosphate as substrates, resulting from enzyme-catalyzed isomerization of RBP and G3P, respectively. The sequence is that of Pyridoxal 5'-phosphate synthase subunit PdxS from Francisella tularensis subsp. tularensis (strain FSC 198).